Here is a 306-residue protein sequence, read N- to C-terminus: Nucleotide-binding protein MUL_1815 (306 aa).

29–36 (GLSGAGRG) provides a ligand contact to ATP. 80–83 (DVRS) is a GTP binding site.

This sequence belongs to the RapZ-like family.

Displays ATPase and GTPase activities. This chain is Nucleotide-binding protein MUL_1815, found in Mycobacterium ulcerans (strain Agy99).